The sequence spans 31 residues: Photosystem II reaction center protein T (31 aa).

The chain crosses the membrane as a helical span at residues 3 to 23 (SVAYILILTMALAVLFFAIAF).

This sequence belongs to the PsbT family. In terms of assembly, PSII is composed of 1 copy each of membrane proteins PsbA, PsbB, PsbC, PsbD, PsbE, PsbF, PsbH, PsbI, PsbJ, PsbK, PsbL, PsbM, PsbT, PsbX, PsbY, PsbZ, Psb30/Ycf12, peripheral proteins PsbO, CyanoQ (PsbQ), PsbU, PsbV and a large number of cofactors. It forms dimeric complexes.

It is found in the cellular thylakoid membrane. In terms of biological role, found at the monomer-monomer interface of the photosystem II (PS II) dimer, plays a role in assembly and dimerization of PSII. PSII is a light-driven water plastoquinone oxidoreductase, using light energy to abstract electrons from H(2)O, generating a proton gradient subsequently used for ATP formation. This is Photosystem II reaction center protein T from Gloeothece citriformis (strain PCC 7424) (Cyanothece sp. (strain PCC 7424)).